The chain runs to 345 residues: Anthranilate phosphoribosyltransferase (345 aa).

Residues glycine 79, 82-83, threonine 87, 89-92, 106-114, and serine 118 contribute to the 5-phospho-alpha-D-ribose 1-diphosphate site; these read GD, NVST, and KHGNRAVSG. Glycine 79 contacts anthranilate. Residue serine 91 participates in Mg(2+) binding. Asparagine 109 serves as a coordination point for anthranilate. Arginine 164 is an anthranilate binding site. Aspartate 223 and glutamate 224 together coordinate Mg(2+).

It belongs to the anthranilate phosphoribosyltransferase family. In terms of assembly, homodimer. The cofactor is Mg(2+).

The enzyme catalyses N-(5-phospho-beta-D-ribosyl)anthranilate + diphosphate = 5-phospho-alpha-D-ribose 1-diphosphate + anthranilate. It participates in amino-acid biosynthesis; L-tryptophan biosynthesis; L-tryptophan from chorismate: step 2/5. Catalyzes the transfer of the phosphoribosyl group of 5-phosphorylribose-1-pyrophosphate (PRPP) to anthranilate to yield N-(5'-phosphoribosyl)-anthranilate (PRA). This Sulfurisphaera tokodaii (strain DSM 16993 / JCM 10545 / NBRC 100140 / 7) (Sulfolobus tokodaii) protein is Anthranilate phosphoribosyltransferase.